A 578-amino-acid polypeptide reads, in one-letter code: MSIQAFVFCGKGSNLAPFTQPDFPFQTQNKDSTAATSGDKLNELVNSALDSTVINEFMQHSTRLPKALLPIGNRPMIEYVLDWCDQADFKEISVVAPVDEIELIESGLTSFLSLRKQQFELIYKALSNSNHSHHLQDPKKINFIPSKANSTGESLQKELLPRINGDFVILPCDFVTDIPPQVLVDQFRNRDDNNLAMTIYYKNSLDSSIDKKQQQKQKQQQFFTVYSENEDSERQPILLDVYSQRDVTKTKYLQIRSHLLWNYPNLTVSTKLLNSFIYFCSFELCQLLKLGPQSMSRQASFKDPFTGNQQQQNPPTTDDDEDRNHDDDDDYKPSATSIQPTYFKKKNDLILDPINCNKSLSKVFRDLSRRSWQHSKPREPIGIFILPNETLFIRANNLNAYMDANRFVLKIKSQTMFTKNIQIQSAAIGADAIVDPKCQISAHSNVKMSVLGTQANIGSRCRVAGSLLFPGVHLGDEVILENCIIGPMAKIGSKCKLSNCYIEGHYVVEPKNNFKGETLANVYLDEDEEDELIYDDSVIAGESEIAEETDSDDRSDEDSDDSEYTDEYEYEDDGLFER.

Phosphoserine is present on residues Ser296 and Ser300. Disordered stretches follow at residues 298–337 (QASF…SATS) and 535–578 (DDSV…LFER). A Phosphothreonine modification is found at Thr306. Residues 544–578 (EIAEETDSDDRSDEDSDDSEYTDEYEYEDDGLFER) are compositionally biased toward acidic residues.

Belongs to the eIF-2B gamma/epsilon subunits family. Component of the translation initiation factor 2B (eIF2B) complex which is a heterodecamer of two sets of five different subunits: alpha, beta, gamma, delta and epsilon. Subunits alpha, beta and delta comprise a regulatory subcomplex and subunits epsilon and gamma comprise a catalytic subcomplex. Within the complex, the hexameric regulatory complex resides at the center, with the two heterodimeric catalytic subcomplexes bound on opposite sides.

The protein localises to the cytoplasm. The protein resides in the cytosol. Acts as a component of the translation initiation factor 2B (eIF2B) complex, which catalyzes the exchange of GDP for GTP on the eukaryotic initiation factor 2 (eIF2) complex gamma subunit. Its guanine nucleotide exchange factor activity is repressed when bound to eIF2 complex phosphorylated on the alpha subunit, thereby limiting the amount of methionyl-initiator methionine tRNA available to the ribosome and consequently global translation is repressed. It activates the synthesis of GCN4 in yeast under amino acid starvation conditions by suppressing the inhibitory effects of multiple AUG codons present in the leader of GCN4 mRNA. It may promote either repression or activation of GCN4 expression depending on amino acid availability. GCD1 stabilizes the interaction between eIF2 and GCD6 and stimulates the catalytic activity in vitro. In Saccharomyces cerevisiae (strain ATCC 204508 / S288c) (Baker's yeast), this protein is Translation initiation factor eIF2B subunit gamma (GCD1).